A 237-amino-acid polypeptide reads, in one-letter code: Cytidylate kinase (237 aa).

An ATP-binding site is contributed by 15–23 (GPSGSGKGT).

It belongs to the cytidylate kinase family. Type 1 subfamily.

It is found in the cytoplasm. It carries out the reaction CMP + ATP = CDP + ADP. The catalysed reaction is dCMP + ATP = dCDP + ADP. The protein is Cytidylate kinase of Coxiella burnetii (strain RSA 493 / Nine Mile phase I).